The following is a 432-amino-acid chain: Anaerobic glycerol-3-phosphate dehydrogenase subunit B (432 aa).

It belongs to the anaerobic G-3-P dehydrogenase subunit B family. Composed of a catalytic GlpA/B dimer and of membrane bound GlpC. It depends on FMN as a cofactor.

The catalysed reaction is a quinone + sn-glycerol 3-phosphate = dihydroxyacetone phosphate + a quinol. It participates in polyol metabolism; glycerol degradation via glycerol kinase pathway; glycerone phosphate from sn-glycerol 3-phosphate (anaerobic route): step 1/1. Functionally, conversion of glycerol 3-phosphate to dihydroxyacetone. Uses fumarate or nitrate as electron acceptor. The polypeptide is Anaerobic glycerol-3-phosphate dehydrogenase subunit B (Haemophilus influenzae (strain 86-028NP)).